Reading from the N-terminus, the 85-residue chain is Large ribosomal subunit protein bL27 (85 aa).

Belongs to the bacterial ribosomal protein bL27 family.

The chain is Large ribosomal subunit protein bL27 from Vesicomyosocius okutanii subsp. Calyptogena okutanii (strain HA).